A 479-amino-acid polypeptide reads, in one-letter code: MTVIIQGRSFPDDLTQYAEFIGQGLLSPEEMRRIDQNAQALGISGLELMESAGTGLAMAARQYQPGKILILCGSGNNGGDGMVAARHLAGEADITVFWYDSGRQTDSTRTQLQRLLSCSVTSIPFRSRDDLIEHTRIFQDTDLIIDALLGTGGTGSVREPVRTCIEFANNAKAPILSADLPSPGIIPDRICAFHRAKTEGAHIYGIGIPLLAEISTGPGDLLILRNRNPDSHKGVGGNILVIGGGPYQGAPYLAGLAALRAGADIVRVVSPHYLPEPDIIHVPTAGDRITTADLATIIPLCKQADVVLCGPGLGPESHDVITSLAPYIRKGVFDADALRDPLPVAGESLYTPHAGEFARMSGLSPGKTPRERAHAIMKAQILGTVLLKGAVDVICDGSRVRFNQTGTPAMTTGGTGDVLAGVCAALMAVVPAFEAACIGAYVTGRAGELITQTCGYGMTARDLLTAVPQVLFRSTSERE.

The interval 1–214 is NAD(P)H-hydrate epimerase; that stretch reads MTVIIQGRSF…GIGIPLLAEI (214 aa). The region spanning 31–214 is the YjeF N-terminal domain; that stretch reads MRRIDQNAQA…GIGIPLLAEI (184 aa). The NADPHX 1; for epimerase activity stretch occupies residues 76 to 80; it reads NNGGD. 2 residues coordinate K(+): N77 and D146. The segment at 150–156 is NADPHX 1; for epimerase activity; the sequence is GTGGTGS. D179 is a (6S)-NADPHX binding site. S182 is a binding site for K(+). Positions 216–474 constitute a YjeF C-terminal domain; that stretch reads TGPGDLLILR…TAVPQVLFRS (259 aa). Residues 216–479 are ADP-dependent (S)-NAD(P)H-hydrate dehydratase; the sequence is TGPGDLLILR…VLFRSTSERE (264 aa). A (6S)-NADPHX-binding site is contributed by G312. An NADPHX 2; for dehydratase activity region spans residues 353-359; that stretch reads HAGEFAR. ADP-binding positions include 388–392 and 407–416; these read KGAVD and TPAMTTGGTG. Position 417 (D417) interacts with (6S)-NADPHX.

The protein in the N-terminal section; belongs to the NnrE/AIBP family. In the C-terminal section; belongs to the NnrD/CARKD family. K(+) serves as cofactor.

The catalysed reaction is (6S)-NADHX + ADP = AMP + phosphate + NADH + H(+). It carries out the reaction (6S)-NADPHX + ADP = AMP + phosphate + NADPH + H(+). It catalyses the reaction (6R)-NADHX = (6S)-NADHX. The enzyme catalyses (6R)-NADPHX = (6S)-NADPHX. Its function is as follows. Bifunctional enzyme that catalyzes the epimerization of the S- and R-forms of NAD(P)HX and the dehydration of the S-form of NAD(P)HX at the expense of ADP, which is converted to AMP. This allows the repair of both epimers of NAD(P)HX, a damaged form of NAD(P)H that is a result of enzymatic or heat-dependent hydration. The polypeptide is Bifunctional NAD(P)H-hydrate repair enzyme Nnr (nnr) (Methanospirillum hungatei JF-1 (strain ATCC 27890 / DSM 864 / NBRC 100397 / JF-1)).